The following is a 474-amino-acid chain: Ribosomal RNA small subunit methyltransferase F (474 aa).

S-adenosyl-L-methionine contacts are provided by residues 119-125, Glu-143, Asp-170, and Asp-188; that span reads AAAPGSK. Cys-241 serves as the catalytic Nucleophile.

This sequence belongs to the class I-like SAM-binding methyltransferase superfamily. RsmB/NOP family.

It localises to the cytoplasm. The enzyme catalyses cytidine(1407) in 16S rRNA + S-adenosyl-L-methionine = 5-methylcytidine(1407) in 16S rRNA + S-adenosyl-L-homocysteine + H(+). Specifically methylates the cytosine at position 1407 (m5C1407) of 16S rRNA. The sequence is that of Ribosomal RNA small subunit methyltransferase F from Shewanella oneidensis (strain ATCC 700550 / JCM 31522 / CIP 106686 / LMG 19005 / NCIMB 14063 / MR-1).